A 197-amino-acid polypeptide reads, in one-letter code: TM2 domain-containing protein 1 (197 aa).

The N-terminal stretch at 1–32 (MAFRWRSLMRFRSTTRLLLLFTFCLTVIHSLG) is a signal peptide. The Extracellular portion of the chain corresponds to 33-105 (NDVDSCDKLH…GFNKTIPCRN (73 aa)). N-linked (GlcNAc...) asparagine glycosylation is found at Asn77, Asn84, Asn98, and Asn105. Residues 106–126 (VSGYSYKVAVALSLFLGWIGA) traverse the membrane as a helical segment. The 48-residue stretch at 108–155 (GYSYKVAVALSLFLGWIGADRFYLGYPALGLLKFCTVGFCGIGSLVDF) folds into the TM2 domain. Residues 127–143 (DRFYLGYPALGLLKFCT) are Cytoplasmic-facing. A helical membrane pass occupies residues 144–164 (VGFCGIGSLVDFMLISMQIVG). Over 165-197 (PSDGSDYIVDYYGARLTRLSITNETYRRMQPSP) the chain is Extracellular. Residue Asn187 is glycosylated (N-linked (GlcNAc...) asparagine).

It belongs to the TM2 family.

The protein resides in the membrane. The polypeptide is TM2 domain-containing protein 1 (tm2d1) (Danio rerio (Zebrafish)).